The primary structure comprises 182 residues: NADH-quinone oxidoreductase subunit I (182 aa).

2 consecutive 4Fe-4S ferredoxin-type domains span residues Leu52–Ala82 and Asp92–Asp121. Residues Cys62, Cys65, Cys68, Cys72, Cys101, Cys104, Cys107, and Cys111 each contribute to the [4Fe-4S] cluster site.

The protein belongs to the complex I 23 kDa subunit family. In terms of assembly, NDH-1 is composed of 13 different subunits. Subunits NuoA, H, J, K, L, M, N constitute the membrane sector of the complex. [4Fe-4S] cluster is required as a cofactor.

It is found in the cell inner membrane. It catalyses the reaction a quinone + NADH + 5 H(+)(in) = a quinol + NAD(+) + 4 H(+)(out). In terms of biological role, NDH-1 shuttles electrons from NADH, via FMN and iron-sulfur (Fe-S) centers, to quinones in the respiratory chain. The immediate electron acceptor for the enzyme in this species is believed to be ubiquinone. Couples the redox reaction to proton translocation (for every two electrons transferred, four hydrogen ions are translocated across the cytoplasmic membrane), and thus conserves the redox energy in a proton gradient. This Pseudomonas fluorescens (strain ATCC BAA-477 / NRRL B-23932 / Pf-5) protein is NADH-quinone oxidoreductase subunit I.